The primary structure comprises 485 residues: NADH-quinone oxidoreductase subunit N (485 aa).

14 helical membrane passes run Leu8–Ile28, Phe35–Val55, Leu75–Leu95, Phe105–Leu125, Ser127–Phe147, Tyr159–Ala179, Leu203–Phe223, Pro235–Met255, Val271–Gln291, Leu297–Lys317, Val326–Leu346, Ala374–Gly394, Trp408–Arg427, and Val455–Ile475.

It belongs to the complex I subunit 2 family. NDH-1 is composed of 13 different subunits. Subunits NuoA, H, J, K, L, M, N constitute the membrane sector of the complex.

The protein localises to the cell inner membrane. The catalysed reaction is a quinone + NADH + 5 H(+)(in) = a quinol + NAD(+) + 4 H(+)(out). Its function is as follows. NDH-1 shuttles electrons from NADH, via FMN and iron-sulfur (Fe-S) centers, to quinones in the respiratory chain. The immediate electron acceptor for the enzyme in this species is believed to be ubiquinone. Couples the redox reaction to proton translocation (for every two electrons transferred, four hydrogen ions are translocated across the cytoplasmic membrane), and thus conserves the redox energy in a proton gradient. The protein is NADH-quinone oxidoreductase subunit N of Cronobacter sakazakii (strain ATCC BAA-894) (Enterobacter sakazakii).